Here is a 458-residue protein sequence, read N- to C-terminus: Cysteine--tRNA ligase (458 aa).

Cysteine 27 serves as a coordination point for Zn(2+). The 'HIGH' region signature appears at 29–39 (MTVYDYMHIGH). 3 residues coordinate Zn(2+): cysteine 208, histidine 233, and glutamate 237. Residues 265–269 (KMSKS) carry the 'KMSKS' region motif. Lysine 268 contacts ATP.

This sequence belongs to the class-I aminoacyl-tRNA synthetase family. As to quaternary structure, monomer. Zn(2+) serves as cofactor.

It is found in the cytoplasm. The catalysed reaction is tRNA(Cys) + L-cysteine + ATP = L-cysteinyl-tRNA(Cys) + AMP + diphosphate. The protein is Cysteine--tRNA ligase of Coxiella burnetii (strain Dugway 5J108-111).